The primary structure comprises 88 residues: Acylphosphatase (88 aa).

One can recognise an Acylphosphatase-like domain in the interval 3–88 (AARFVVSGVV…VPPTEDFVTG (86 aa)). Active-site residues include R18 and N36.

The protein belongs to the acylphosphatase family.

The catalysed reaction is an acyl phosphate + H2O = a carboxylate + phosphate + H(+). This chain is Acylphosphatase (acyP), found in Xanthomonas oryzae pv. oryzae (strain MAFF 311018).